The sequence spans 210 residues: Guanylate kinase (210 aa).

Residues 23-203 (GRVVVLSGPS…ACAELVSLLV (181 aa)) form the Guanylate kinase-like domain. 30-37 (GPSAVGKS) is an ATP binding site.

Belongs to the guanylate kinase family.

It is found in the cytoplasm. It carries out the reaction GMP + ATP = GDP + ADP. Its function is as follows. Essential for recycling GMP and indirectly, cGMP. This Mycobacterium leprae (strain TN) protein is Guanylate kinase (gmk).